The following is a 339-amino-acid chain: UPF0324 membrane protein spyM18_1033 (339 aa).

The next 9 helical transmembrane spans lie at 7–24, 28–50, 57–79, 84–106, 118–140, 150–172, 256–275, 290–307, and 314–336; these read KLPG…AWYL, FPII…FYGH, GISF…GLNL, AVGM…VAYG, ATLV…APVI, AISV…GQLL, FILF…SFGV, FIVM…LVKL, and AILL…QLSL.

It belongs to the UPF0324 family.

The protein localises to the cell membrane. The polypeptide is UPF0324 membrane protein spyM18_1033 (Streptococcus pyogenes serotype M18 (strain MGAS8232)).